Consider the following 602-residue polypeptide: Proline--tRNA ligase (602 aa).

The protein belongs to the class-II aminoacyl-tRNA synthetase family. ProS type 1 subfamily. In terms of assembly, homodimer.

The protein resides in the cytoplasm. It catalyses the reaction tRNA(Pro) + L-proline + ATP = L-prolyl-tRNA(Pro) + AMP + diphosphate. Catalyzes the attachment of proline to tRNA(Pro) in a two-step reaction: proline is first activated by ATP to form Pro-AMP and then transferred to the acceptor end of tRNA(Pro). As ProRS can inadvertently accommodate and process non-cognate amino acids such as alanine and cysteine, to avoid such errors it has two additional distinct editing activities against alanine. One activity is designated as 'pretransfer' editing and involves the tRNA(Pro)-independent hydrolysis of activated Ala-AMP. The other activity is designated 'posttransfer' editing and involves deacylation of mischarged Ala-tRNA(Pro). The misacylated Cys-tRNA(Pro) is not edited by ProRS. This Thermosynechococcus vestitus (strain NIES-2133 / IAM M-273 / BP-1) protein is Proline--tRNA ligase.